A 463-amino-acid chain; its full sequence is NADH dehydrogenase [ubiquinone] iron-sulfur protein 2, mitochondrial (463 aa).

The transit peptide at Met1–Gly33 directs the protein to the mitochondrion. The residue at position 62 (Lys62) is an N6-acetyllysine. Position 118 is a symmetric dimethylarginine (Arg118). Cys326, Cys332, and Cys347 together coordinate [4Fe-4S] cluster.

The protein belongs to the complex I 49 kDa subunit family. In terms of assembly, core subunit of respiratory chain NADH dehydrogenase (Complex I) which is composed of 45 different subunits. Component of the iron-sulfur (IP) fragment of the enzyme. Interacts with NDUFAF3. Interacts with NDUFAF7. Interacts with CERS2. [4Fe-4S] cluster serves as cofactor. Dimethylation at Arg-118 by NDUFAF7 takes place after NDUFS2 assembles into the complex I, leading to stabilize the early intermediate complex.

The protein resides in the mitochondrion inner membrane. The catalysed reaction is a ubiquinone + NADH + 5 H(+)(in) = a ubiquinol + NAD(+) + 4 H(+)(out). Core subunit of the mitochondrial membrane respiratory chain NADH dehydrogenase (Complex I) which catalyzes electron transfer from NADH through the respiratory chain, using ubiquinone as an electron acceptor. Essential for the catalytic activity of complex I. Essential for the assembly of complex I. Redox-sensitive, critical component of the oxygen-sensing pathway in the pulmonary vasculature which plays a key role in acute pulmonary oxygen-sensing and hypoxic pulmonary vasoconstriction. Plays an important role in carotid body sensing of hypoxia. Essential for glia-like neural stem and progenitor cell proliferation, differentiation and subsequent oligodendrocyte or neuronal maturation. The chain is NADH dehydrogenase [ubiquinone] iron-sulfur protein 2, mitochondrial (NDUFS2) from Homo sapiens (Human).